Here is a 424-residue protein sequence, read N- to C-terminus: 3-oxo-tetronate kinase (424 aa).

ATP contacts are provided by residues Ser-264, 363–366 (GGET), and Gly-408.

It belongs to the four-carbon acid sugar kinase family.

The enzyme catalyses 3-dehydro-L-erythronate + ATP = 3-dehydro-4-O-phospho-L-erythronate + ADP + H(+). It catalyses the reaction 3-dehydro-D-erythronate + ATP = 3-dehydro-4-O-phospho-D-erythronate + ADP + H(+). Catalyzes the ATP-dependent phosphorylation of 3-oxo-tetronate to 3-oxo-tetronate 4-phosphate. This Methylobacterium radiotolerans (strain ATCC 27329 / DSM 1819 / JCM 2831 / NBRC 15690 / NCIMB 10815 / 0-1) protein is 3-oxo-tetronate kinase.